We begin with the raw amino-acid sequence, 661 residues long: tRNA uridine 5-carboxymethylaminomethyl modification enzyme MnmG (661 aa).

FAD-binding positions include 16–21 (GAGHAG), valine 128, and serine 183. The segment at 206–230 (PRVNGNTIDYSKTEEEPGDKTPRHF) is disordered. Residues 216–230 (SKTEEEPGDKTPRHF) show a composition bias toward basic and acidic residues. 277-291 (GPRYCPSIEDKVVRF) is an NAD(+) binding site. Glutamine 374 contacts FAD.

This sequence belongs to the MnmG family. In terms of assembly, homodimer. Heterotetramer of two MnmE and two MnmG subunits. Requires FAD as cofactor.

Its subcellular location is the cytoplasm. In terms of biological role, NAD-binding protein involved in the addition of a carboxymethylaminomethyl (cmnm) group at the wobble position (U34) of certain tRNAs, forming tRNA-cmnm(5)s(2)U34. The sequence is that of tRNA uridine 5-carboxymethylaminomethyl modification enzyme MnmG from Lactobacillus helveticus (strain DPC 4571).